Consider the following 898-residue polypeptide: Nitrate reductase [NAD(P)H] (898 aa).

A compositionally biased stretch (basic and acidic residues) spans 1 to 15; that stretch reads MAASVENRRFTHHEP. The interval 1–65 is disordered; the sequence is MAASVENRRF…SSSEDENEND (65 aa). Cysteine 180 contacts Mo-molybdopterin. A Cytochrome b5 heme-binding domain is found at 528–603; it reads SKMFSMSEVK…LEDYRIGELI (76 aa). Heme is bound by residues histidine 563 and histidine 586. In terms of domain architecture, FAD-binding FR-type spans 642-754; the sequence is GAKIPTKLVY…KGPLGHVEYT (113 aa). FAD contacts are provided by residues 694-697, 711-715, phenylalanine 716, phenylalanine 723, 728-730, and threonine 781; these read RAYT, VVKIY, and LMS.

The protein belongs to the nitrate reductase family. As to quaternary structure, homodimer. FAD serves as cofactor. Heme is required as a cofactor. Requires Mo-molybdopterin as cofactor.

It catalyses the reaction nitrite + NAD(+) + H2O = nitrate + NADH + H(+). The enzyme catalyses nitrite + NADP(+) + H2O = nitrate + NADPH + H(+). Functionally, nitrate reductase is a key enzyme involved in the first step of nitrate assimilation in plants, fungi and bacteria. The polypeptide is Nitrate reductase [NAD(P)H] (NIA1) (Betula pendula (European white birch)).